Here is a 100-residue protein sequence, read N- to C-terminus: uncharacterized protein (100 aa).

This is an uncharacterized protein from Acanthamoeba polyphaga mimivirus (APMV).